Consider the following 138-residue polypeptide: Superoxide dismutase [Mn] (138 aa).

Mn(2+) is bound by residues His1, His49, Asp133, and His137.

It belongs to the iron/manganese superoxide dismutase family. Requires Mn(2+) as cofactor.

The catalysed reaction is 2 superoxide + 2 H(+) = H2O2 + O2. Its function is as follows. Destroys superoxide anion radicals which are normally produced within the cells and which are toxic to biological systems. The protein is Superoxide dismutase [Mn] (sodA) of Mycobacterium malmoense.